The primary structure comprises 471 residues: Transcription initiation factor TFIID subunit 7-like (471 aa).

Disordered regions lie at residues 1–84 (MERG…RQGT), 192–211 (SPEG…TGPT), and 328–377 (EMMG…EELE). The residue at position 199 (serine 199) is a Phosphoserine. The span at 347-377 (GDDDDDEDEDDEDYGNEKEEEETDNSEEELE) shows a compositional bias: acidic residues. Residues 358–433 (EDYGNEKEEE…QKELLRKVEN (76 aa)) adopt a coiled-coil conformation.

This sequence belongs to the TAF7 family. In terms of assembly, TFIID is composed of TATA binding protein (TBP) and a number of TBP-associated factors (TAFs). TAF7L may replace TAF7 in a spermatogenesis-specific form of TFIID. Interacts with TBP; the interaction occurs in a sub-population of cells (pachytene and haploid round spermatids) and is developmentally regulated through differential intracellular localization of the two proteins. Interacts with TAF1. As to expression, testis-specific (at protein level). Expressed during spermatogenesis from spermatogonia stage up to the stage of round spermatids.

Its subcellular location is the nucleus. It localises to the cytoplasm. Its function is as follows. Probably functions as a spermatogenesis-specific component of the DNA-binding general transcription factor complex TFIID, a multimeric protein complex that plays a central role in mediating promoter responses to various activators and repressors. May play a role in spermatogenesis. This Mus musculus (Mouse) protein is Transcription initiation factor TFIID subunit 7-like (Taf7l).